Here is a 98-residue protein sequence, read N- to C-terminus: NADH-ubiquinone oxidoreductase chain 4L (98 aa).

3 consecutive transmembrane segments (helical) span residues 1–21, 29–49, and 61–81; these read MSMV…GLLM, SLLC…MVVL, and IILL…LVMV.

This sequence belongs to the complex I subunit 4L family. In terms of assembly, core subunit of respiratory chain NADH dehydrogenase (Complex I) which is composed of 45 different subunits.

Its subcellular location is the mitochondrion inner membrane. It carries out the reaction a ubiquinone + NADH + 5 H(+)(in) = a ubiquinol + NAD(+) + 4 H(+)(out). In terms of biological role, core subunit of the mitochondrial membrane respiratory chain NADH dehydrogenase (Complex I) which catalyzes electron transfer from NADH through the respiratory chain, using ubiquinone as an electron acceptor. Part of the enzyme membrane arm which is embedded in the lipid bilayer and involved in proton translocation. The polypeptide is NADH-ubiquinone oxidoreductase chain 4L (MT-ND4L) (Acinonyx jubatus (Cheetah)).